The chain runs to 256 residues: Alcohol dehydrogenase (256 aa).

12–41 (FVAGLGGIGLDTTKELLKRDLKNLVILDRI) is a binding site for NAD(+). Residue serine 140 participates in substrate binding. The Proton acceptor role is filled by tyrosine 153.

This sequence belongs to the short-chain dehydrogenases/reductases (SDR) family. Homodimer.

It catalyses the reaction a primary alcohol + NAD(+) = an aldehyde + NADH + H(+). The catalysed reaction is a secondary alcohol + NAD(+) = a ketone + NADH + H(+). This is Alcohol dehydrogenase from Drosophila ananassae (Fruit fly).